Here is a 364-residue protein sequence, read N- to C-terminus: tRNA 2-selenouridine synthase (364 aa).

The Rhodanese domain occupies 14–137 (LLADTPLIDV…LRQTAIQATW (124 aa)). Catalysis depends on C97, which acts as the S-selanylcysteine intermediate.

This sequence belongs to the SelU family. As to quaternary structure, monomer.

It catalyses the reaction 5-methylaminomethyl-2-thiouridine(34) in tRNA + selenophosphate + (2E)-geranyl diphosphate + H2O + H(+) = 5-methylaminomethyl-2-selenouridine(34) in tRNA + (2E)-thiogeraniol + phosphate + diphosphate. The enzyme catalyses 5-methylaminomethyl-2-thiouridine(34) in tRNA + (2E)-geranyl diphosphate = 5-methylaminomethyl-S-(2E)-geranyl-thiouridine(34) in tRNA + diphosphate. It carries out the reaction 5-methylaminomethyl-S-(2E)-geranyl-thiouridine(34) in tRNA + selenophosphate + H(+) = 5-methylaminomethyl-2-(Se-phospho)selenouridine(34) in tRNA + (2E)-thiogeraniol. The catalysed reaction is 5-methylaminomethyl-2-(Se-phospho)selenouridine(34) in tRNA + H2O = 5-methylaminomethyl-2-selenouridine(34) in tRNA + phosphate. Involved in the post-transcriptional modification of the uridine at the wobble position (U34) of tRNA(Lys), tRNA(Glu) and tRNA(Gln). Catalyzes the conversion of 2-thiouridine (S2U-RNA) to 2-selenouridine (Se2U-RNA). Acts in a two-step process involving geranylation of 2-thiouridine (S2U) to S-geranyl-2-thiouridine (geS2U) and subsequent selenation of the latter derivative to 2-selenouridine (Se2U) in the tRNA chain. The protein is tRNA 2-selenouridine synthase of Salmonella enteritidis.